A 260-amino-acid chain; its full sequence is Oxidoreductase macE (260 aa).

Belongs to the oxidoreductase OpS7 family.

Its pathway is secondary metabolite biosynthesis; terpenoid biosynthesis. Its function is as follows. Oxidoreductase; part of the gene cluster that mediates the biosynthesis of macrophorins, isoprenoid epoxycyclohexenones containing cyclized drimane moieties. The first step of the pathway is the synthesis of 6-methylsalicylic acid (6-MSA) by the polyketide synthase macA. 6-MSA is then converted to m-cresol by the decarboxylase macB. The cytochrome P450 monooxygenase macC then catalyzes the oxidation of m-cresol to toluquinol. Epoxidation of toluquinol is then performed by the short chain dehydrogenase macD, with the help of macE, and a further prenylation by macG leads to 7-deacetoxyyanuthone A. The next step is the hydroxylation of C-22 of 7-deacetoxyyanuthone A by the cytochrome P450 monooxygenase macH to yield 22-deacetylyanuthone A. O-Mevalon transferase macI then attaches mevalon to the hydroxyl group of 22-deacetylyanuthone A to produce yanuthone E. The terpene cyclase macJ catalyzes the cyclization of 22-deacetylyanuthone A to macrophorin A. MacJ is also able to catalyze cyclization of yanuthone E and 7-deacetoxyyanuthone A to their corresponding macrophorins. The macJ products can be further modified by macH and macJ, as well as by the FAD-dependent monooxygenase macF, to produce additional macrophorins, including 4'-oxomacrophorin A, 4'-oxomacrophorin D and 4'-oxomacrophorin E. The protein is Oxidoreductase macE of Penicillium terrestre.